Consider the following 585-residue polypeptide: Pentatricopeptide repeat-containing protein At4g21170 (585 aa).

PPR repeat units lie at residues Leu-152–Pro-186, Ser-187–Ser-221, Asp-222–Glu-247, Ser-252–Leu-286, Ser-287–Thr-321, Asp-324–Arg-358, Trp-360–Val-394, Asp-396–Pro-431, Cys-432–Phe-466, Asp-467–Leu-501, Asp-502–Ile-534, and Asn-538–Pro-572.

The protein belongs to the PPR family. P subfamily.

This is Pentatricopeptide repeat-containing protein At4g21170 from Arabidopsis thaliana (Mouse-ear cress).